The chain runs to 119 residues: Iron-sulfur cluster insertion protein ErpA (119 aa).

3 residues coordinate iron-sulfur cluster: cysteine 47, cysteine 111, and cysteine 113.

Belongs to the HesB/IscA family. In terms of assembly, homodimer. Iron-sulfur cluster is required as a cofactor.

In terms of biological role, required for insertion of 4Fe-4S clusters for at least IspG. The sequence is that of Iron-sulfur cluster insertion protein ErpA from Blochmanniella floridana.